Reading from the N-terminus, the 575-residue chain is Flagellin B (575 aa).

It belongs to the bacterial flagellin family. In terms of assembly, heteromer of flaA and flaB.

It localises to the secreted. The protein localises to the bacterial flagellum. Functionally, flagellin is the subunit protein which polymerizes to form the filaments of bacterial flagella. The chain is Flagellin B (flaB) from Campylobacter jejuni.